We begin with the raw amino-acid sequence, 451 residues long: FAD-dependent monooxygenase adrH (451 aa).

Positions 39, 53, and 112 each coordinate FAD. The active site involves Tyr196. Asp288 and Ala301 together coordinate FAD. An N-linked (GlcNAc...) asparagine glycan is attached at Asn385. The chain crosses the membrane as a helical span at residues 426-446; it reads TLLWVSSLALFLFFPWLGSYL.

The protein belongs to the paxM FAD-dependent monooxygenase family. Requires FAD as cofactor.

The protein resides in the membrane. Its pathway is secondary metabolite biosynthesis; terpenoid biosynthesis. In terms of biological role, FAD-dependent monooxygenase; part of the gene cluster that mediates the biosynthesis of andrastins, meroterpenoid compounds that exhibit inhibitory activity against ras farnesyltransferase, suggesting that they could be promising leads for antitumor agents. The first step of the pathway is the synthesis of 3,5-dimethylorsellinic acid (DMOA) by the polyketide synthase adrD via condensation of one acetyl-CoA starter unit with 3 malonyl-CoA units and 2 methylations. DMAO is then converted to farnesyl-DMAO by the prenyltransferase adrG. The methyltransferase adrK catalyzes the methylation of the carboxyl group of farnesyl-DMAO to farnesyl-DMAO methyl ester which is further converted to epoxyfarnesyl-DMAO methyl ester by the FAD-dependent monooxygenase adrH. The terpene cyclase adrI then catalyzes the carbon skeletal rearrangement to generate the andrastin E, the first compound in the pathway having the andrastin scaffold, with the tetracyclic ring system. The post-cyclization tailoring enzymes adrF, adrE, adrJ, and adrA, are involved in the conversion of andrastin E into andrastin A. The short chain dehydrogenase adrF is responsible for the oxidation of the C-3 a hydroxyl group of andrastin E to yield the corresponding ketone, andrastin D. The ketoreductase adrE stereoselectively reduces the carbonyl moiety to reverse the stereochemistry of the C-3 position to yield andrastin F. The acetyltransferase adrJ is the acetyltransferase that attaches the acetyl group to the C-3 hydroxyl group of andrastin F to yield andrastin C. Finally, the cytochrome P450 monooxygenase adrA catalyzes two sequential oxidation reactions of the C-23 methyl group, to generate the corresponding alcohol andrastin B, and aldehyde andrastin A. The polypeptide is FAD-dependent monooxygenase adrH (Penicillium rubens (strain ATCC 28089 / DSM 1075 / NRRL 1951 / Wisconsin 54-1255) (Penicillium chrysogenum)).